The following is a 180-amino-acid chain: NAD(P)H-quinone oxidoreductase subunit I, chloroplastic (180 aa).

4Fe-4S ferredoxin-type domains are found at residues 55–84 (GRIH…VDWR) and 95–124 (LNYS…MTEE). Residues cysteine 64, cysteine 67, cysteine 70, cysteine 74, cysteine 104, cysteine 107, cysteine 110, and cysteine 114 each coordinate [4Fe-4S] cluster.

This sequence belongs to the complex I 23 kDa subunit family. NDH is composed of at least 16 different subunits, 5 of which are encoded in the nucleus. Requires [4Fe-4S] cluster as cofactor.

Its subcellular location is the plastid. It localises to the chloroplast thylakoid membrane. The catalysed reaction is a plastoquinone + NADH + (n+1) H(+)(in) = a plastoquinol + NAD(+) + n H(+)(out). It catalyses the reaction a plastoquinone + NADPH + (n+1) H(+)(in) = a plastoquinol + NADP(+) + n H(+)(out). Its function is as follows. NDH shuttles electrons from NAD(P)H:plastoquinone, via FMN and iron-sulfur (Fe-S) centers, to quinones in the photosynthetic chain and possibly in a chloroplast respiratory chain. The immediate electron acceptor for the enzyme in this species is believed to be plastoquinone. Couples the redox reaction to proton translocation, and thus conserves the redox energy in a proton gradient. The sequence is that of NAD(P)H-quinone oxidoreductase subunit I, chloroplastic from Drimys granadensis.